A 467-amino-acid polypeptide reads, in one-letter code: Matrix metalloproteinase-18 (467 aa).

The first 17 residues, 1–17 (MNSLLLKLLLCVAITAA), serve as a signal peptide directing secretion. A propeptide spanning residues 18–99 (FPADKQDEPP…PRCGVYDVGQ (82 aa)) is cleaved from the precursor. The Cysteine switch motif lies at 90–97 (PRCGVYDV). The Zn(2+) site is built by C92 and H218. E219 is an active-site residue. Residues H222 and H228 each coordinate Zn(2+). Hemopexin repeat units lie at residues 277-326 (PSRC…WPSL), 327-373 (PTNI…GFPK), 375-423 (VKRI…FPGI), and 424-467 (PDKI…WLGC). C280 and C467 are disulfide-bonded.

It belongs to the peptidase M10A family. Zn(2+) serves as cofactor. Requires Ca(2+) as cofactor. In terms of tissue distribution, expressed only transiently in whole animal, at time when tadpole feeding begins.

It is found in the secreted. The protein resides in the extracellular space. It localises to the extracellular matrix. Its activity is regulated as follows. Up-regulated in the tail by thyroid hormone. Cleaves collagen type I. May play a role in larval tissue degeneration and adult organogenesis during amphibian metamorphosis. May be involved in tail resorption. The polypeptide is Matrix metalloproteinase-18 (mmp18) (Xenopus laevis (African clawed frog)).